The sequence spans 327 residues: Zinc transport protein ZntB (327 aa).

At 1 to 273 (MEGIKGSEVN…SRRTYTMSLM (273 aa)) the chain is on the cytoplasmic side. A helical transmembrane segment spans residues 274–294 (AMVFLPSTFLTGLFGVNLGGI). The Periplasmic segment spans residues 295–300 (PGGGYQ). Residues 301 to 321 (FGFSAFCIMLVVLIGGVAWWL) form a helical membrane-spanning segment. Over 322–327 (HRSKWL) the chain is Cytoplasmic.

The protein belongs to the CorA metal ion transporter (MIT) (TC 1.A.35) family.

It localises to the cell inner membrane. The catalysed reaction is Zn(2+)(out) + H(+)(out) = Zn(2+)(in) + H(+)(in). Functionally, zinc transporter. Acts as a Zn(2+):proton symporter, which likely mediates zinc ion uptake. The polypeptide is Zinc transport protein ZntB (Enterobacter sp. (strain 638)).